A 55-amino-acid chain; its full sequence is Large ribosomal subunit protein bL33 (55 aa).

This sequence belongs to the bacterial ribosomal protein bL33 family.

This Buchnera aphidicola subsp. Baizongia pistaciae (strain Bp) protein is Large ribosomal subunit protein bL33.